Reading from the N-terminus, the 375-residue chain is MGKDFKSLVTRCIYVGKMNDNAKKLKIATEELKDLGNNVMKRVKLCEEQQQMKRLDKVQTWLRQADTVIKEAEEYFLMSSSSSSSGLISSSHKMEKKICKKLKEVQEIKSRGMFEVVAESTGGIGGGAGGGLTIKDSDEQTIGLEAVSGLVWRCLTMENTGIIGLYGVEGVGKTTVLTQVNNRLLQQKANGFDFVLWVFVSKNLNLQKIQDTIREKIGFLDRTWTSKSEEEKAAKIFEILSKRRFALFLDDVWEKVDLVKAGVPPPDAQNRSKIVFTTCSEEVCKEMSAQTKIKVEKLAWERAWDLFKKNVGEDTIKSHPDIAKVAQEVAARCDGLPLALVTIGRAMASKKTPQEWRDALYILSNSPPNFSGQIS.

An NB-ARC domain is found at 158–372; the sequence is ENTGIIGLYG…LSNSPPNFSG (215 aa). 167–174 serves as a coordination point for ATP; that stretch reads GVEGVGKT.

Its function is as follows. Possible disease resistance protein. This is Probable disease resistance protein At1g52660 from Arabidopsis thaliana (Mouse-ear cress).